The primary structure comprises 305 residues: Leucine-rich repeat-containing protein 25 (305 aa).

Residues 1–20 (MGGTLAWTLLLPLLLRESDS) form the signal peptide. Topologically, residues 21–165 (LEPSCTVSSA…SCAPGLASAT (145 aa)) are extracellular. 3 LRR repeats span residues 39-59 (SATC…QSLR), 62-83 (NVIL…FFAH), and 86-107 (KLEV…LAAR). Residues Asn44 and Asn55 are each glycosylated (N-linked (GlcNAc...) asparagine). Residues Asn130 and Asn148 are each glycosylated (N-linked (GlcNAc...) asparagine). Residues 166–186 (IGAVVVSGCLLLGLAIAGPVL) form a helical membrane-spanning segment. The Cytoplasmic portion of the chain corresponds to 187–305 (AWRLWRCRVA…DEEEYVIPGH (119 aa)). A disordered region spans residues 204–229 (PWAAQDGPKPGLGLQPRYGSRSAPKP). A Phosphotyrosine modification is found at Tyr284.

As to quaternary structure, interacts with RIGI. Interacts with SQSTM1. Interacts with p65/RELA; this interaction promotes the degradation of RELA through autophagy. Expressed in plasmacytoid dendritic cells (PDC), monocyte-derived dendritic cells (MDDC), granulocytes, monocytes, B-lymphocytes, peripheral blood leukocytes, spleen, bone marrow, and, to a lesser extent, lymph nodes, fetal liver, and appendix but not in thymus.

Its subcellular location is the membrane. It localises to the cytoplasm. In terms of biological role, plays a role in the inhibition of RLR-mediated type I interferon signaling pathway by targeting RIGI for autophagic degradation. Interacts specifically with ISG15-associated RIGI to promote interaction between RIGI and the autophagic cargo receptor p62/SQSTM1 to mediate RIGI degradation via selective autophagy. Also plays a role in the inhibition of NF-kappa-B signaling pathway and inflammatory response by promoting the degradation of p65/RELA. This Homo sapiens (Human) protein is Leucine-rich repeat-containing protein 25 (LRRC25).